The chain runs to 555 residues: MSEAEARPTNFIRQIIDEDLENGKHSMVHTRFPPEPNGYLHIGHAKSICLNFGIAQDYKGQCNLRFDDTNPVKEDLEFVESIKRDVQWLGFQWSGEVRYSSDYFEQLHNYAVELIGKGLAYVDELSPEQIREYRGSLTSAGKNSPYRDRSVAENLELFAKMRNGEFAEGTACLRAKIDMASNFIVLRDPVIYRIKFADHHQTGNRWCIYPMYDFTHCISDALEGITHSLCTLEFQDNRRLYDWVLDNITIPVHPRQYEFSRLNLEYAIMSKRKLNLLVTEKVVEGWDDPRMLTVSGLRRRGYSAGSIREFCRRIGVTKQDNIVEMAALESCIRDDLNENAPRAMAVLDAVKVVIENLPAHHEQTICMPNHPNRPEMGTRQVPFSREIYIDRADFREEANKHYKRLVLGKEVRLRNAYVIKAERIAKDEEGNITCLFCSCDIDTLSKDPADGRKVKGVIHWVSAEHALLAEFRLYDRLFSVPNPAAAEDFLTTINPESLVIRQGFVEPGMQQALASAPYQFEREGYFCADSVYSTSNKLVFNRTVGLRDTWAKNGE.

Positions 34–44 match the 'HIGH' region motif; the sequence is PEPNGYLHIGH. ATP-binding positions include 35 to 37 and 41 to 47; these read EPN and HIGHAKS. Residues Asp67 and Tyr212 each coordinate L-glutamine. Residues Thr231, 261 to 262, and 269 to 271 each bind ATP; these read RL and MSK. The short motif at 268–272 is the 'KMSKS' region element; the sequence is IMSKR.

This sequence belongs to the class-I aminoacyl-tRNA synthetase family. As to quaternary structure, monomer.

The protein localises to the cytoplasm. The enzyme catalyses tRNA(Gln) + L-glutamine + ATP = L-glutaminyl-tRNA(Gln) + AMP + diphosphate. The polypeptide is Glutamine--tRNA ligase (Erwinia tasmaniensis (strain DSM 17950 / CFBP 7177 / CIP 109463 / NCPPB 4357 / Et1/99)).